Here is a 145-residue protein sequence, read N- to C-terminus: Aspartate 1-decarboxylase (145 aa).

Ser-25 acts as the Schiff-base intermediate with substrate; via pyruvic acid in catalysis. Ser-25 carries the pyruvic acid (Ser) modification. Residue Thr-57 coordinates substrate. The active-site Proton donor is Tyr-58. 73–75 (GAA) provides a ligand contact to substrate.

Belongs to the PanD family. As to quaternary structure, heterooctamer of four alpha and four beta subunits. Pyruvate serves as cofactor. In terms of processing, is synthesized initially as an inactive proenzyme, which is activated by self-cleavage at a specific serine bond to produce a beta-subunit with a hydroxyl group at its C-terminus and an alpha-subunit with a pyruvoyl group at its N-terminus.

It localises to the cytoplasm. It carries out the reaction L-aspartate + H(+) = beta-alanine + CO2. It participates in cofactor biosynthesis; (R)-pantothenate biosynthesis; beta-alanine from L-aspartate: step 1/1. Functionally, catalyzes the pyruvoyl-dependent decarboxylation of aspartate to produce beta-alanine. The chain is Aspartate 1-decarboxylase from Micrococcus luteus (strain ATCC 4698 / DSM 20030 / JCM 1464 / CCM 169 / CCUG 5858 / IAM 1056 / NBRC 3333 / NCIMB 9278 / NCTC 2665 / VKM Ac-2230) (Micrococcus lysodeikticus).